Here is a 60-residue protein sequence, read N- to C-terminus: Large ribosomal subunit protein bL32 (60 aa).

The span at 1–16 shows a compositional bias: basic residues; that stretch reads MAVPKRKTSPSKRGMR. The tract at residues 1-60 is disordered; the sequence is MAVPKRKTSPSKRGMRRSADALKAPTYVEDKNSGELRRPHHVDLKTGMYRGRQVLEPKEA. Over residues 28-44 the composition is skewed to basic and acidic residues; it reads VEDKNSGELRRPHHVDL.

The protein belongs to the bacterial ribosomal protein bL32 family.

This Chelativorans sp. (strain BNC1) protein is Large ribosomal subunit protein bL32.